Reading from the N-terminus, the 413-residue chain is Tyrosine--tRNA ligase (413 aa).

Residue Tyr34 participates in L-tyrosine binding. A 'HIGH' region motif is present at residues 39–48; the sequence is CTAQSLHVGN. Tyr171 and Gln175 together coordinate L-tyrosine. Positions 231–235 match the 'KMSKS' region motif; sequence KMGKT. Lys234 lines the ATP pocket. Positions 346–411 constitute an S4 RNA-binding domain; the sequence is IPITELLVTI…GKKCHILVKI (66 aa).

This sequence belongs to the class-I aminoacyl-tRNA synthetase family. TyrS type 1 subfamily. In terms of assembly, homodimer.

It localises to the cytoplasm. The enzyme catalyses tRNA(Tyr) + L-tyrosine + ATP = L-tyrosyl-tRNA(Tyr) + AMP + diphosphate + H(+). Catalyzes the attachment of tyrosine to tRNA(Tyr) in a two-step reaction: tyrosine is first activated by ATP to form Tyr-AMP and then transferred to the acceptor end of tRNA(Tyr). In Orientia tsutsugamushi (strain Ikeda) (Rickettsia tsutsugamushi), this protein is Tyrosine--tRNA ligase.